We begin with the raw amino-acid sequence, 130 residues long: DUF35 domain-containing scaffold protein (130 aa).

Residues C20, C23, C34, and C37 each coordinate Zn(2+).

Belongs to the scaffold protein DUF35 family. As to quaternary structure, interacts with acetoacetyl-CoA thiolase and HMG-CoA synthase (HMGCS) that catalyzes the first and second step in the mevalonate pathway, respectively.

Functions as a scaffold to connect the acetoacetyl-CoA thiolase and HMG-CoA synthase (HMGCS) dimers in the channeling thiolase/HMGCS complex, which allows for efficient coupling of the endergonic thiolase reaction with the exergonic HMGCS reaction. In Methanothermococcus thermolithotrophicus (Methanococcus thermolithotrophicus), this protein is DUF35 domain-containing scaffold protein.